We begin with the raw amino-acid sequence, 516 residues long: Apolipoprotein N-acyltransferase (516 aa).

5 helical membrane-spanning segments follow: residues 23 to 43, 68 to 88, 94 to 114, 135 to 155, and 178 to 198; these read ILIL…AFAP, AFWL…RWIY, VAGL…AYLA, WLLA…WVMT, and LGGI…LAML. A CN hydrolase domain is found at 241–481; sequence AQGNIAQELK…VLTGFAQSRQ (241 aa). The active-site Proton acceptor is the E279. The active site involves K339. The active-site Nucleophile is C391. The chain crosses the membrane as a helical span at residues 489–509; sequence FGNLPVVLGCGALLLLALLLG.

This sequence belongs to the CN hydrolase family. Apolipoprotein N-acyltransferase subfamily.

It localises to the cell inner membrane. It carries out the reaction N-terminal S-1,2-diacyl-sn-glyceryl-L-cysteinyl-[lipoprotein] + a glycerophospholipid = N-acyl-S-1,2-diacyl-sn-glyceryl-L-cysteinyl-[lipoprotein] + a 2-acyl-sn-glycero-3-phospholipid + H(+). It participates in protein modification; lipoprotein biosynthesis (N-acyl transfer). Its function is as follows. Catalyzes the phospholipid dependent N-acylation of the N-terminal cysteine of apolipoprotein, the last step in lipoprotein maturation. This Chromobacterium violaceum (strain ATCC 12472 / DSM 30191 / JCM 1249 / CCUG 213 / NBRC 12614 / NCIMB 9131 / NCTC 9757 / MK) protein is Apolipoprotein N-acyltransferase.